A 713-amino-acid polypeptide reads, in one-letter code: Phosphoribosylformylglycinamidine synthase subunit PurL (713 aa).

Residue histidine 32 is part of the active site. Tyrosine 35 provides a ligand contact to ATP. Position 76 (glutamate 76) interacts with Mg(2+). Residues serine 77–histidine 80 and arginine 99 contribute to the substrate site. Histidine 78 (proton acceptor) is an active-site residue. Aspartate 100 lines the Mg(2+) pocket. Glutamine 224 is a binding site for substrate. Aspartate 252 provides a ligand contact to Mg(2+). Substrate is bound at residue glutamate 296 to glutamine 298. ATP contacts are provided by aspartate 471 and glycine 508. Asparagine 509 is a binding site for Mg(2+). Residue serine 511 coordinates substrate.

This sequence belongs to the FGAMS family. As to quaternary structure, monomer. Part of the FGAM synthase complex composed of 1 PurL, 1 PurQ and 2 PurS subunits.

It localises to the cytoplasm. It catalyses the reaction N(2)-formyl-N(1)-(5-phospho-beta-D-ribosyl)glycinamide + L-glutamine + ATP + H2O = 2-formamido-N(1)-(5-O-phospho-beta-D-ribosyl)acetamidine + L-glutamate + ADP + phosphate + H(+). It functions in the pathway purine metabolism; IMP biosynthesis via de novo pathway; 5-amino-1-(5-phospho-D-ribosyl)imidazole from N(2)-formyl-N(1)-(5-phospho-D-ribosyl)glycinamide: step 1/2. Functionally, part of the phosphoribosylformylglycinamidine synthase complex involved in the purines biosynthetic pathway. Catalyzes the ATP-dependent conversion of formylglycinamide ribonucleotide (FGAR) and glutamine to yield formylglycinamidine ribonucleotide (FGAM) and glutamate. The FGAM synthase complex is composed of three subunits. PurQ produces an ammonia molecule by converting glutamine to glutamate. PurL transfers the ammonia molecule to FGAR to form FGAM in an ATP-dependent manner. PurS interacts with PurQ and PurL and is thought to assist in the transfer of the ammonia molecule from PurQ to PurL. The chain is Phosphoribosylformylglycinamidine synthase subunit PurL from Thermococcus sibiricus (strain DSM 12597 / MM 739).